We begin with the raw amino-acid sequence, 118 residues long: Large ribosomal subunit protein bL17 (118 aa).

It belongs to the bacterial ribosomal protein bL17 family. Part of the 50S ribosomal subunit. Contacts protein L32.

The chain is Large ribosomal subunit protein bL17 from Gemmatimonas aurantiaca (strain DSM 14586 / JCM 11422 / NBRC 100505 / T-27).